The sequence spans 88 residues: UPF0495 protein DEHA2C16280g (88 aa).

Residues 25–47 (YPLFAAMGVAVASGCFFTYRHFA) traverse the membrane as a helical segment.

It belongs to the UPF0495 family.

Its subcellular location is the membrane. The sequence is that of UPF0495 protein DEHA2C16280g from Debaryomyces hansenii (strain ATCC 36239 / CBS 767 / BCRC 21394 / JCM 1990 / NBRC 0083 / IGC 2968) (Yeast).